Here is a 33-residue protein sequence, read N- to C-terminus: Potassium channel toxin alpha-KTx 10.5 (33 aa).

3 disulfides stabilise this stretch: cysteine 4/cysteine 23, cysteine 9/cysteine 28, and cysteine 13/cysteine 30.

As to expression, expressed by the venom gland.

It localises to the secreted. In terms of biological role, inhibits less than 5% of human voltage-gated potassium (Kv) channel Kv1.3/KCNA3 currents at 100nM concentration and does not block human Kv1.1/KCNA1 and Kv1.2/KCNA2 currents. This Centruroides bonito (Scorpion) protein is Potassium channel toxin alpha-KTx 10.5.